A 53-amino-acid polypeptide reads, in one-letter code: Large ribosomal subunit protein bL32 (53 aa).

The span at 1–20 shows a compositional bias: basic residues; that stretch reads MAVPKRRVSHTRAAKRRTHY. The interval 1 to 53 is disordered; that stretch reads MAVPKRRVSHTRAAKRRTHYKLTLPMPVKDADGTWRMPHHMNMTTGEYKTTKA. Positions 42-53 are enriched in polar residues; the sequence is NMTTGEYKTTKA.

This sequence belongs to the bacterial ribosomal protein bL32 family.

This Sulfurovum sp. (strain NBC37-1) protein is Large ribosomal subunit protein bL32.